The chain runs to 381 residues: Chaperone protein DnaJ (381 aa).

The J domain occupies 5–70 (DFYEVLGVSR…QKKAAYDQYG (66 aa)). Residues 136 to 214 (GVTKEIEVPT…CHGQGRKQKT (79 aa)) form a CR-type zinc finger. Cys-149, Cys-152, Cys-166, Cys-169, Cys-188, Cys-191, Cys-202, and Cys-205 together coordinate Zn(2+). CXXCXGXG motif repeat units lie at residues 149 to 156 (CDSCDGSG), 166 to 173 (CGTCHGHG), 188 to 195 (CPTCHGKG), and 202 to 209 (CNECHGQG).

This sequence belongs to the DnaJ family. In terms of assembly, homodimer. The cofactor is Zn(2+).

The protein resides in the cytoplasm. Its function is as follows. Participates actively in the response to hyperosmotic and heat shock by preventing the aggregation of stress-denatured proteins and by disaggregating proteins, also in an autonomous, DnaK-independent fashion. Unfolded proteins bind initially to DnaJ; upon interaction with the DnaJ-bound protein, DnaK hydrolyzes its bound ATP, resulting in the formation of a stable complex. GrpE releases ADP from DnaK; ATP binding to DnaK triggers the release of the substrate protein, thus completing the reaction cycle. Several rounds of ATP-dependent interactions between DnaJ, DnaK and GrpE are required for fully efficient folding. Also involved, together with DnaK and GrpE, in the DNA replication of plasmids through activation of initiation proteins. The chain is Chaperone protein DnaJ from Vibrio parahaemolyticus serotype O3:K6 (strain RIMD 2210633).